Here is a 303-residue protein sequence, read N- to C-terminus: Sporulation regulatory protein (303 aa).

Residues 26–213 enclose the FtsK domain; that stretch reads TGRLRAGLRK…HRVNDKQTAE (188 aa). ATP is bound at residue 43 to 50; the sequence is GANHSGKS.

In terms of biological role, involved in sporulation inhibition and pock formation. This is Sporulation regulatory protein (spi) from Streptomyces azureus.